An 892-amino-acid polypeptide reads, in one-letter code: Ice-binding protein 1 (892 aa).

The first 23 residues, 1 to 23, serve as a signal peptide directing secretion; the sequence is MNHSIKKTYLVFTMLLGFILLAG. Cys-24 carries N-palmitoyl cysteine lipidation. Residue Cys-24 is the site of S-diacylglycerol cysteine attachment. 7 consecutive BIG2 domains span residues 43 to 111, 134 to 205, 221 to 288, 306 to 386, 392 to 471, 478 to 558, and 565 to 638; these read TSIA…ITAS, TALA…SLGS, SIAL…ITAD, TSIM…TVTV, TSIA…TNLT, NSIV…NLTV, and SIDV…QASL. An Ice-binding site motif (T-A/G-X-T/N) motif is present at residues 866-869; that stretch reads TGAN.

This sequence belongs to the ice-binding protein family.

It is found in the cell outer membrane. In terms of biological role, ice-binding adhesion protein that adsorbs this bacterium onto ice to maintain a favorable position in its aquatic habitat. Inhibits growth of the ice crystals. Has high thermal hysteresis (TH) activity, which is the ability to lower the freezing point of an aqueous solution below its melting point. The TH activity of this protein is approximately 1.4 degrees Celsius at 25 uM and little below 2 degrees Celsius at 80 uM. This is Ice-binding protein 1 from Shewanella frigidimarina (strain NCIMB 400).